The following is a 1044-amino-acid chain: Eukaryotic translation initiation factor 3 subunit A (1044 aa).

A coiled-coil region spans residues Leu92 to Ala121. One can recognise a PCI domain in the interval Met339–Phe523. Residues Ile611–Gly907 adopt a coiled-coil conformation. Residues Ser797–Arg901 are compositionally biased toward basic and acidic residues. The disordered stretch occupies residues Ser797 to Ser1044. 2 stretches are compositionally biased toward low complexity: residues Lys943–Ala956 and Ser1006–Thr1017.

Belongs to the eIF-3 subunit A family. In terms of assembly, component of the eukaryotic translation initiation factor 3 (eIF-3) complex.

It localises to the cytoplasm. RNA-binding component of the eukaryotic translation initiation factor 3 (eIF-3) complex, which is involved in protein synthesis of a specialized repertoire of mRNAs and, together with other initiation factors, stimulates binding of mRNA and methionyl-tRNAi to the 40S ribosome. The eIF-3 complex specifically targets and initiates translation of a subset of mRNAs involved in cell proliferation. This chain is Eukaryotic translation initiation factor 3 subunit A (tif32), found in Aspergillus clavatus (strain ATCC 1007 / CBS 513.65 / DSM 816 / NCTC 3887 / NRRL 1 / QM 1276 / 107).